Reading from the N-terminus, the 363-residue chain is Thioredoxin domain-containing protein C13F5.05, mitochondrial (363 aa).

The N-terminal 24 residues, 1 to 24, are a transit peptide targeting the mitochondrion; that stretch reads MLFRIPTLFTLFLACFSLVSGVFG. Positions 32–141 constitute a Thioredoxin domain; it reads NTIELNSKNF…KSLQKFVSDS (110 aa).

It localises to the mitochondrion. The sequence is that of Thioredoxin domain-containing protein C13F5.05, mitochondrial from Schizosaccharomyces pombe (strain 972 / ATCC 24843) (Fission yeast).